The sequence spans 82 residues: Small ribosomal subunit protein bS16 (82 aa).

This sequence belongs to the bacterial ribosomal protein bS16 family.

The polypeptide is Small ribosomal subunit protein bS16 (Shewanella sp. (strain ANA-3)).